Consider the following 132-residue polypeptide: Dehydratase CTB10 (132 aa).

One can recognise an EthD domain in the interval 21 to 117 (PDQSEEDHHN…IPDHFNFADM (97 aa)).

The protein belongs to the tpcK family.

It participates in mycotoxin biosynthesis. Dehydratase; part of the gene cluster that mediates the biosynthesis of cercosporin, a light-activated, non-host-selective toxin. The perylenequinone chromophore of cercosporin absorbs light energy to attain an electronically-activated triplet state and produces active oxygen species such as the hydroxyl radical, superoxide, hydrogen peroxide or singlet oxygen upon reaction with oxygen molecules. These reactive oxygen species cause damage to various cellular components including lipids, proteins and nucleic acids. The first step of cercosporin biosynthesis is performed by the polyketide synthase CTB1 which catalyzes the formation of nor-toralactone. The starter unit acyltransferase (SAT) domain of CTB1 initiates polyketide extension by the selective utilization of acetyl-CoA, which is elongated to the heptaketide in the beta-ketoacyl synthase (KS) domain by successive condensations with six malonyl units introduced by the malonyl acyltransferase (MAT) domain. The product template (PT) domain catalyzes C4-C9 and C2-C11 aldol cyclizations and dehydrations to a trihydroxynaphthalene, which is thought to be delivered to the thioesterase (TE) domain for product release. The bifunctional enzyme CTB3 then methylates nor-toralactone to toralactone before conducting an unusual oxidative aromatic ring opening. The O-methyltransferase CTB2 further methylates the nascent OH-6 of the CBT3 product, blocking further oxidation at this site before the reductase CTB6 reduces the 2-oxopropyl ketone at position C7, giving naphthalene. The FAD-dependent monooxygenase CTB5 in concert with the multicopper oxidase CTB12 are responsible for homodimerization of naphthalene with CTB7 installing the dioxepine moiety, finally producing cercosporin. The fasciclin domain-containing protein CTB11 might act with CTB5 and CTB12 whereas the roles of CTB9 and CTB10 have still to be elucidated. The chain is Dehydratase CTB10 from Cercospora beticola (Sugarbeet leaf spot fungus).